A 498-amino-acid polypeptide reads, in one-letter code: Probable malate:quinone oxidoreductase 2 (498 aa).

The protein belongs to the MQO family. FAD is required as a cofactor.

The enzyme catalyses (S)-malate + a quinone = a quinol + oxaloacetate. It functions in the pathway carbohydrate metabolism; tricarboxylic acid cycle; oxaloacetate from (S)-malate (quinone route): step 1/1. In Staphylococcus epidermidis (strain ATCC 35984 / DSM 28319 / BCRC 17069 / CCUG 31568 / BM 3577 / RP62A), this protein is Probable malate:quinone oxidoreductase 2.